A 616-amino-acid polypeptide reads, in one-letter code: Dihydroxy-acid dehydratase (616 aa).

Mg(2+) is bound at residue Asp-81. Cys-122 is a [2Fe-2S] cluster binding site. Residues Asp-123 and Lys-124 each contribute to the Mg(2+) site. N6-carboxylysine is present on Lys-124. Cys-195 is a [2Fe-2S] cluster binding site. Glu-491 provides a ligand contact to Mg(2+). Ser-517 (proton acceptor) is an active-site residue.

The protein belongs to the IlvD/Edd family. As to quaternary structure, homodimer. The cofactor is [2Fe-2S] cluster. Mg(2+) serves as cofactor.

The catalysed reaction is (2R)-2,3-dihydroxy-3-methylbutanoate = 3-methyl-2-oxobutanoate + H2O. It catalyses the reaction (2R,3R)-2,3-dihydroxy-3-methylpentanoate = (S)-3-methyl-2-oxopentanoate + H2O. It participates in amino-acid biosynthesis; L-isoleucine biosynthesis; L-isoleucine from 2-oxobutanoate: step 3/4. The protein operates within amino-acid biosynthesis; L-valine biosynthesis; L-valine from pyruvate: step 3/4. Functionally, functions in the biosynthesis of branched-chain amino acids. Catalyzes the dehydration of (2R,3R)-2,3-dihydroxy-3-methylpentanoate (2,3-dihydroxy-3-methylvalerate) into 2-oxo-3-methylpentanoate (2-oxo-3-methylvalerate) and of (2R)-2,3-dihydroxy-3-methylbutanoate (2,3-dihydroxyisovalerate) into 2-oxo-3-methylbutanoate (2-oxoisovalerate), the penultimate precursor to L-isoleucine and L-valine, respectively. This is Dihydroxy-acid dehydratase from Escherichia coli O7:K1 (strain IAI39 / ExPEC).